Reading from the N-terminus, the 273-residue chain is Transmembrane epididymal protein 1 (273 aa).

Transmembrane regions (helical) follow at residues 34-54 (IVTGSLLTFYVVLCLDGGMVL), 72-92 (LTMFILLTLNGCVDFMSKNVL), 96-116 (CVGLEKGTLVLIIYELLLLMV), 129-149 (VYSLLILVVFLLLLVLTAELW), 158-178 (LMETFLILMMGSWLMQAGFIL), and 195-215 (IMFVTTFFCWHVMINASFLLG).

It belongs to the TMEM45 family.

Its subcellular location is the membrane. The sequence is that of Transmembrane epididymal protein 1 (TEDDM1) from Homo sapiens (Human).